We begin with the raw amino-acid sequence, 393 residues long: Acetyl-CoA acetyltransferase (393 aa).

The active-site Acyl-thioester intermediate is the Cys-88. Catalysis depends on proton acceptor residues His-349 and Cys-379.

This sequence belongs to the thiolase-like superfamily. Thiolase family. Homotetramer.

It is found in the cytoplasm. The catalysed reaction is 2 acetyl-CoA = acetoacetyl-CoA + CoA. It participates in biopolymer metabolism; poly-(R)-3-hydroxybutanoate biosynthesis. Its activity is regulated as follows. The condensation reaction is inhibited by free CoA. The cleavage reaction is characterized by substrate inhibition by acetoacetyl-CoA, which is partially relieved by free CoA. In terms of biological role, catalyzes the condensation of two acetyl-coA units to form acetoacetyl-CoA. Is involved in the biosynthesis of polyhydroxybutyrate (PHB), which is accumulated as an intracellular energy reserve material when cells grow under conditions of nutrient limitation. Also catalyzes the reverse reaction, i.e. the cleavage of acetoacetyl-CoA, and is therefore also involved in the reutilization of PHB. The protein is Acetyl-CoA acetyltransferase of Cupriavidus necator (strain ATCC 17699 / DSM 428 / KCTC 22496 / NCIMB 10442 / H16 / Stanier 337) (Ralstonia eutropha).